Here is a 160-residue protein sequence, read N- to C-terminus: Cytochrome b6-f complex subunit 4 (160 aa).

The next 3 membrane-spanning stretches (helical) occupy residues 36-56 (LLYIFPVVILGTIACIVGLSV), 95-115 (LLGIALQTLVPLGLMLIPFIE), and 128-148 (IAMAVFLFGTATTIYLGIGAA).

The protein belongs to the cytochrome b family. PetD subfamily. In terms of assembly, the 4 large subunits of the cytochrome b6-f complex are cytochrome b6, subunit IV (17 kDa polypeptide, PetD), cytochrome f and the Rieske protein, while the 4 small subunits are PetG, PetL, PetM and PetN. The complex functions as a dimer.

The protein localises to the cellular thylakoid membrane. In terms of biological role, component of the cytochrome b6-f complex, which mediates electron transfer between photosystem II (PSII) and photosystem I (PSI), cyclic electron flow around PSI, and state transitions. The protein is Cytochrome b6-f complex subunit 4 of Synechococcus sp. (strain CC9311).